The primary structure comprises 1549 residues: Structural maintenance of chromosomes protein 4 (1549 aa).

Residues M1–P78 are disordered. The segment covering K26 to N36 has biased composition (basic residues). Positions R37–G59 are enriched in basic and acidic residues. G121–S128 provides a ligand contact to ATP. The stretch at M326–K604 forms a coiled coil. 2 stretches are compositionally biased toward basic and acidic residues: residues L396 to K407 and A420 to K444. Disordered regions lie at residues L396–K444 and K460–K485. An SMC hinge domain is found at K619 to M734. Coiled-coil stretches lie at residues K786 to R1058 and E1144 to A1182. A compositionally biased stretch (polar residues) spans I1440–D1459. Residues I1440–E1549 are disordered. Residues G1460–S1474 show a composition bias toward basic and acidic residues. Residues T1510–K1523 are compositionally biased toward polar residues.

This sequence belongs to the SMC family. SMC4 subfamily. In terms of assembly, component of the condensin I complex, which contains the mix-1/SMC2 and smc-4/SMC4 heterodimer, and three non SMC subunits that probably regulate the complex: dpy-26, capg-1 and dpy-28. Within the complex, interacts with mix-1, dpy-26, capg-1 and dpy-28. Component of the condensin II complex, which contains the mix-1/SMC2 and smc-4/SMC4 heterodimer, and three non SMC subunits, kle-2, capg-2 and hcp-6 that probably regulate the complex. Within the complex, interacts with mix-1, kle-2, capg-2 and hcp-6. Interacts with smcl-1.

It localises to the nucleus. The protein resides in the chromosome. In terms of biological role, central component of the condensin I complex, a complex required for conversion of interphase chromatin into mitotic-like condense chromosomes. The condensin I complex introduces positive supercoils into relaxed DNA in the presence of type I topoisomerases. Converts nicked DNA into positive knotted forms in the presence of type II topoisomerases. Also a central component of the condensin II complex, a complex that seems to play a role in prophase chromosome condensation. Both the condensin complex I and II play a role in meiotic and mitotic chromosome segregation. Plays a role in robust cytokinesis upon the presence of chromatin obstructions. The chain is Structural maintenance of chromosomes protein 4 (smc-4) from Caenorhabditis elegans.